Here is a 238-residue protein sequence, read N- to C-terminus: Cysteine-rich venom protein natrin-2 (238 aa).

The signal sequence occupies residues 1 to 19 (MIAFIVLLSLAAVLQQSSG). Residues 38–164 (VDKHNALRRS…SSKYLYVCQY (127 aa)) enclose the SCP domain. 8 cysteine pairs are disulfide-bonded: Cys-75–Cys-153, Cys-92–Cys-165, Cys-148–Cys-162, Cys-184–Cys-191, Cys-187–Cys-196, Cys-200–Cys-233, Cys-209–Cys-227, and Cys-218–Cys-231. The 34-residue stretch at 200-233 (CKHHNVFSNCQSLAKQNACQTEWMKSKCAASCFC) folds into the ShKT domain.

In terms of tissue distribution, expressed by the venom gland.

The protein localises to the secreted. Its function is as follows. Inhibits carbachol-induced muscle contraction and weakly blocks muscle contraction evoked by potassium. The polypeptide is Cysteine-rich venom protein natrin-2 (Naja atra (Chinese cobra)).